The following is a 585-amino-acid chain: uncharacterized protein (585 aa).

Positions 1–18 are enriched in polar residues; it reads MSALSTKLEPTNSYSESL. A disordered region spans residues 1-23; sequence MSALSTKLEPTNSYSESLPPQRR.

The protein belongs to the protein kinase superfamily. ADCK protein kinase family.

This is an uncharacterized protein from Synechocystis sp. (strain ATCC 27184 / PCC 6803 / Kazusa).